A 134-amino-acid chain; its full sequence is Small ribosomal subunit protein uS9c (134 aa).

The segment covering 105–114 has biased composition (basic and acidic residues); sequence DHHLTRDARA. Residues 105-134 are disordered; the sequence is DHHLTRDARAKERKKYGLHKARKAPQYSKR. The span at 115–134 shows a compositional bias: basic residues; the sequence is KERKKYGLHKARKAPQYSKR.

It belongs to the universal ribosomal protein uS9 family.

Its subcellular location is the plastid. It localises to the cyanelle. This Cyanophora paradoxa protein is Small ribosomal subunit protein uS9c (rps9).